Reading from the N-terminus, the 236-residue chain is tRNA1(Val) (adenine(37)-N6)-methyltransferase (236 aa).

It belongs to the methyltransferase superfamily. tRNA (adenine-N(6)-)-methyltransferase family.

The protein resides in the cytoplasm. The enzyme catalyses adenosine(37) in tRNA1(Val) + S-adenosyl-L-methionine = N(6)-methyladenosine(37) in tRNA1(Val) + S-adenosyl-L-homocysteine + H(+). Its function is as follows. Specifically methylates the adenine in position 37 of tRNA(1)(Val) (anticodon cmo5UAC). The protein is tRNA1(Val) (adenine(37)-N6)-methyltransferase of Shewanella sp. (strain MR-7).